A 239-amino-acid chain; its full sequence is Small ribosomal subunit protein uS2 (239 aa).

It belongs to the universal ribosomal protein uS2 family.

In Lysinibacillus sphaericus (strain C3-41), this protein is Small ribosomal subunit protein uS2.